Reading from the N-terminus, the 271-residue chain is Formamidopyrimidine-DNA glycosylase (271 aa).

Proline 2 (schiff-base intermediate with DNA) is an active-site residue. Residue glutamate 3 is the Proton donor of the active site. Lysine 56 (proton donor; for beta-elimination activity) is an active-site residue. DNA-binding residues include histidine 89, arginine 107, and arginine 151. The FPG-type zinc finger occupies 236 to 270 (MVYARQGQPCRVCATPIKSLRQGQRSTFYCPHCQK). Arginine 260 (proton donor; for delta-elimination activity) is an active-site residue.

It belongs to the FPG family. As to quaternary structure, monomer. It depends on Zn(2+) as a cofactor.

It carries out the reaction Hydrolysis of DNA containing ring-opened 7-methylguanine residues, releasing 2,6-diamino-4-hydroxy-5-(N-methyl)formamidopyrimidine.. The enzyme catalyses 2'-deoxyribonucleotide-(2'-deoxyribose 5'-phosphate)-2'-deoxyribonucleotide-DNA = a 3'-end 2'-deoxyribonucleotide-(2,3-dehydro-2,3-deoxyribose 5'-phosphate)-DNA + a 5'-end 5'-phospho-2'-deoxyribonucleoside-DNA + H(+). In terms of biological role, involved in base excision repair of DNA damaged by oxidation or by mutagenic agents. Acts as a DNA glycosylase that recognizes and removes damaged bases. Has a preference for oxidized purines, such as 7,8-dihydro-8-oxoguanine (8-oxoG). Has AP (apurinic/apyrimidinic) lyase activity and introduces nicks in the DNA strand. Cleaves the DNA backbone by beta-delta elimination to generate a single-strand break at the site of the removed base with both 3'- and 5'-phosphates. The chain is Formamidopyrimidine-DNA glycosylase from Albidiferax ferrireducens (strain ATCC BAA-621 / DSM 15236 / T118) (Rhodoferax ferrireducens).